A 210-amino-acid polypeptide reads, in one-letter code: Large ribosomal subunit protein bL25 (210 aa).

Residues Glu191–Pro200 show a composition bias toward low complexity. A disordered region spans residues Glu191–Lys210.

Belongs to the bacterial ribosomal protein bL25 family. CTC subfamily. As to quaternary structure, part of the 50S ribosomal subunit; part of the 5S rRNA/L5/L18/L25 subcomplex. Contacts the 5S rRNA. Binds to the 5S rRNA independently of L5 and L18.

In terms of biological role, this is one of the proteins that binds to the 5S RNA in the ribosome where it forms part of the central protuberance. This chain is Large ribosomal subunit protein bL25, found in Paracidovorax citrulli (strain AAC00-1) (Acidovorax citrulli).